A 154-amino-acid chain; its full sequence is Myoglobin (154 aa).

One can recognise a Globin domain in the interval 2–148; it reads GLSDGEWHLV…FRNDIAAKYK (147 aa). Ser-4 is modified (phosphoserine). Residue His-65 participates in nitrite binding. O2 is bound at residue His-65. Thr-68 is modified (phosphothreonine). His-94 provides a ligand contact to heme b.

This sequence belongs to the globin family. Monomeric.

The protein resides in the cytoplasm. The protein localises to the sarcoplasm. The enzyme catalyses Fe(III)-heme b-[protein] + nitric oxide + H2O = Fe(II)-heme b-[protein] + nitrite + 2 H(+). It catalyses the reaction H2O2 + AH2 = A + 2 H2O. In terms of biological role, monomeric heme protein which primary function is to store oxygen and facilitate its diffusion within muscle tissues. Reversibly binds oxygen through a pentacoordinated heme iron and enables its timely and efficient release as needed during periods of heightened demand. Depending on the oxidative conditions of tissues and cells, and in addition to its ability to bind oxygen, it also has a nitrite reductase activity whereby it regulates the production of bioactive nitric oxide. Under stress conditions, like hypoxia and anoxia, it also protects cells against reactive oxygen species thanks to its pseudoperoxidase activity. The chain is Myoglobin (MB) from Halichoerus grypus (Gray seal).